A 624-amino-acid polypeptide reads, in one-letter code: Membrane protein insertase YidC (624 aa).

A helical transmembrane segment spans residues 8–28; it reads MIIAIALSLAVLLGWNYFVTA. Positions 36 to 95 are disordered; that stretch reads QQQAAQVNPSQGVNPSQGVDPSQGVNASPSPKEGGPSAPVPGTLPGAAGGSPQAALARDE. Residues 43-64 are compositionally biased toward polar residues; that stretch reads NPSQGVNPSQGVDPSQGVNASP. 5 helical membrane-spanning segments follow: residues 370-390, 396-416, 470-490, 526-542, and 559-579; these read FDLL…FKAL, LFGN…LFFL, WPVL…FVTI, LLHL…TMFL, and FTFM…GLVI.

Belongs to the OXA1/ALB3/YidC family. Type 1 subfamily. Interacts with the Sec translocase complex via SecD. Specifically interacts with transmembrane segments of nascent integral membrane proteins during membrane integration.

The protein localises to the cell inner membrane. Required for the insertion and/or proper folding and/or complex formation of integral membrane proteins into the membrane. Involved in integration of membrane proteins that insert both dependently and independently of the Sec translocase complex, as well as at least some lipoproteins. Aids folding of multispanning membrane proteins. The sequence is that of Membrane protein insertase YidC from Methylobacterium sp. (strain 4-46).